A 455-amino-acid polypeptide reads, in one-letter code: Exodeoxyribonuclease 7 large subunit (455 aa).

The protein belongs to the XseA family. As to quaternary structure, heterooligomer composed of large and small subunits.

The protein resides in the cytoplasm. It carries out the reaction Exonucleolytic cleavage in either 5'- to 3'- or 3'- to 5'-direction to yield nucleoside 5'-phosphates.. In terms of biological role, bidirectionally degrades single-stranded DNA into large acid-insoluble oligonucleotides, which are then degraded further into small acid-soluble oligonucleotides. This chain is Exodeoxyribonuclease 7 large subunit, found in Oceanobacillus iheyensis (strain DSM 14371 / CIP 107618 / JCM 11309 / KCTC 3954 / HTE831).